A 1072-amino-acid chain; its full sequence is Isoleucine--tRNA ligase, cytoplasmic (1072 aa).

The 'HIGH' region motif lies at 47–57 (PFATGTPHYGH). Lys486 participates in a covalent cross-link: Glycyl lysine isopeptide (Lys-Gly) (interchain with G-Cter in ubiquitin). Residues 602 to 606 (KMSKS) carry the 'KMSKS' region motif. An ATP-binding site is contributed by Lys605. Residues Ser829 and Ser1059 each carry the phosphoserine modification.

Belongs to the class-I aminoacyl-tRNA synthetase family.

It localises to the cytoplasm. It carries out the reaction tRNA(Ile) + L-isoleucine + ATP = L-isoleucyl-tRNA(Ile) + AMP + diphosphate. This is Isoleucine--tRNA ligase, cytoplasmic (ILS1) from Saccharomyces cerevisiae (strain ATCC 204508 / S288c) (Baker's yeast).